Here is a 260-residue protein sequence, read N- to C-terminus: Acyl-coenzyme A diphosphatase FITM2 (260 aa).

At 1 to 23 (MERLENCAQMFQRKFLNEAFRRH) the chain is on the cytoplasmic side. The helical transmembrane segment at 24-44 (CPVLLACIALGGSLLKELSPL) threads the bilayer. Residues 45-57 (PDSYWNNKRNVLN) lie on the Lumenal side of the membrane. A helical transmembrane segment spans residues 58 to 78 (VYFVKFCWGWTLWLLLPFITL). Over 79 to 93 (TNYKLTGSITKVLRR) the chain is Cytoplasmic. Residues 94–114 (LSSLLVGTLFWYLCTNLFLYI) traverse the membrane as a helical segment. Topologically, residues 115–144 (EHITGSCYESEALLDSIEHQDRKECRLHGG) are lumenal. Residues 145–165 (FWHGFDISGHCFLLSYCILII) form a helical membrane-spanning segment. H154 is an active-site residue. The Cytoplasmic portion of the chain corresponds to 166-189 (LEETSVIRSIQFERHWHRMAINAQ). A run of 2 helical transmembrane segments spans residues 190-210 (FTALSILVIIWVWMFLCTAVY) and 211-231 (FHNIFQKVIGTAFGMLAWYIT). Residue H212 is part of the active site. Residues 232–260 (YRWWYLQPISPGLPPASASHSEKEPVYKN) lie on the Cytoplasmic side of the membrane.

This sequence belongs to the FIT family. FIT2 subfamily.

Its subcellular location is the endoplasmic reticulum membrane. It carries out the reaction an acyl-CoA + H2O = an acyl-4'-phosphopantetheine + adenosine 3',5'-bisphosphate + 2 H(+). Functionally, fatty acyl-coenzyme A (CoA) diphosphatase that hydrolyzes fatty acyl-CoA to yield acyl-4'-phosphopantetheine and adenosine 3',5'-bisphosphate. Preferentially hydrolyzes unsaturated long-chain acyl-CoA substrates in the endoplasmic reticulum (ER) lumen. This catalytic activity is required for maintaining ER structure and for lipid droplets (LDs) biogenesis, which are lipid storage organelles involved in maintaining lipid and energy homeostasis. May directly bind to diacylglycerol (DAGs) and triacylglycerol, which is also important for LD biogenesis. May support directional budding of nacent LDs from the ER into the cytosol by reducing DAG levels at sites of LD formation. May play a role in the regulation of cell morphology, ER morphology and cytoskeletal organization. This is Acyl-coenzyme A diphosphatase FITM2 from Xenopus laevis (African clawed frog).